Consider the following 232-residue polypeptide: 5'-methylthioadenosine/S-adenosylhomocysteine nucleosidase (232 aa).

Glu12 serves as the catalytic Proton acceptor. Substrate contacts are provided by residues Gly78, Ile152, and 173 to 174 (ME). The active-site Proton donor is Asp197.

The protein belongs to the PNP/UDP phosphorylase family. MtnN subfamily. Homodimer.

The enzyme catalyses S-adenosyl-L-homocysteine + H2O = S-(5-deoxy-D-ribos-5-yl)-L-homocysteine + adenine. The catalysed reaction is S-methyl-5'-thioadenosine + H2O = 5-(methylsulfanyl)-D-ribose + adenine. It catalyses the reaction 5'-deoxyadenosine + H2O = 5-deoxy-D-ribose + adenine. It participates in amino-acid biosynthesis; L-methionine biosynthesis via salvage pathway; S-methyl-5-thio-alpha-D-ribose 1-phosphate from S-methyl-5'-thioadenosine (hydrolase route): step 1/2. Its function is as follows. Catalyzes the irreversible cleavage of the glycosidic bond in both 5'-methylthioadenosine (MTA) and S-adenosylhomocysteine (SAH/AdoHcy) to adenine and the corresponding thioribose, 5'-methylthioribose and S-ribosylhomocysteine, respectively. Also cleaves 5'-deoxyadenosine, a toxic by-product of radical S-adenosylmethionine (SAM) enzymes, into 5-deoxyribose and adenine. Thus, is required for in vivo function of the radical SAM enzymes biotin synthase and lipoic acid synthase, that are inhibited by 5'-deoxyadenosine accumulation. This is 5'-methylthioadenosine/S-adenosylhomocysteine nucleosidase from Cronobacter sakazakii (strain ATCC BAA-894) (Enterobacter sakazakii).